The sequence spans 135 residues: Transcription antitermination protein NusB (135 aa).

Belongs to the NusB family.

In terms of biological role, involved in transcription antitermination. Required for transcription of ribosomal RNA (rRNA) genes. Binds specifically to the boxA antiterminator sequence of the ribosomal RNA (rrn) operons. The sequence is that of Transcription antitermination protein NusB from Shewanella pealeana (strain ATCC 700345 / ANG-SQ1).